The following is a 465-amino-acid chain: Glutamate--tRNA ligase 1 (465 aa).

The 'HIGH' region motif lies at 8–18; the sequence is PSPTGLMHLGN. Positions 249 to 253 match the 'KMSKS' region motif; it reads PLSKR. Residue Lys-252 participates in ATP binding.

The protein belongs to the class-I aminoacyl-tRNA synthetase family. Glutamate--tRNA ligase type 1 subfamily. Monomer.

It localises to the cytoplasm. It carries out the reaction tRNA(Glu) + L-glutamate + ATP = L-glutamyl-tRNA(Glu) + AMP + diphosphate. Functionally, catalyzes the attachment of glutamate to tRNA(Glu) in a two-step reaction: glutamate is first activated by ATP to form Glu-AMP and then transferred to the acceptor end of tRNA(Glu). The sequence is that of Glutamate--tRNA ligase 1 from Coxiella burnetii (strain CbuG_Q212) (Coxiella burnetii (strain Q212)).